The primary structure comprises 1058 residues: Carbamoyl phosphate synthase large chain (1058 aa).

The interval 1 to 401 is carboxyphosphate synthetic domain; the sequence is MAKRTDIKKI…CLLKACRSLE (401 aa). The ATP site is built by Arg-129, Arg-169, Gly-175, Gly-176, Arg-208, Ile-210, Glu-215, Gly-241, Ile-242, His-243, Gln-284, and Glu-298. In terms of domain architecture, ATP-grasp 1 spans 133-327; sequence KQLMKELGEP…IAKIAAKIAV (195 aa). 3 residues coordinate Mg(2+): Gln-284, Glu-298, and Asn-300. Mn(2+) is bound by residues Gln-284, Glu-298, and Asn-300. The segment at 402-546 is oligomerization domain; the sequence is IGVDHNELKG…YSTYEWENES (145 aa). Residues 547–929 form a carbamoyl phosphate synthetic domain region; it reads IKSEKESVIV…ALYKAFEASY (383 aa). Residues 671–861 form the ATP-grasp 2 domain; that stretch reads EKALKDLGIP…MAQVATKLIL (191 aa). Positions 707, 746, 748, 752, 777, 778, 779, 780, 820, and 832 each coordinate ATP. Mg(2+) is bound by residues Gln-820, Glu-832, and Asn-834. Mn(2+) contacts are provided by Gln-820, Glu-832, and Asn-834. One can recognise an MGS-like domain in the interval 930–1058; the sequence is LHMPEYGTIV…ESRTFSIEAI (129 aa). The interval 930-1058 is allosteric domain; the sequence is LHMPEYGTIV…ESRTFSIEAI (129 aa).

This sequence belongs to the CarB family. As to quaternary structure, composed of two chains; the small (or glutamine) chain promotes the hydrolysis of glutamine to ammonia, which is used by the large (or ammonia) chain to synthesize carbamoyl phosphate. Tetramer of heterodimers (alpha,beta)4. Requires Mg(2+) as cofactor. It depends on Mn(2+) as a cofactor.

It catalyses the reaction hydrogencarbonate + L-glutamine + 2 ATP + H2O = carbamoyl phosphate + L-glutamate + 2 ADP + phosphate + 2 H(+). The catalysed reaction is hydrogencarbonate + NH4(+) + 2 ATP = carbamoyl phosphate + 2 ADP + phosphate + 2 H(+). The protein operates within amino-acid biosynthesis; L-arginine biosynthesis; carbamoyl phosphate from bicarbonate: step 1/1. It participates in pyrimidine metabolism; UMP biosynthesis via de novo pathway; (S)-dihydroorotate from bicarbonate: step 1/3. In terms of biological role, large subunit of the glutamine-dependent carbamoyl phosphate synthetase (CPSase). CPSase catalyzes the formation of carbamoyl phosphate from the ammonia moiety of glutamine, carbonate, and phosphate donated by ATP, constituting the first step of 2 biosynthetic pathways, one leading to arginine and/or urea and the other to pyrimidine nucleotides. The large subunit (synthetase) binds the substrates ammonia (free or transferred from glutamine from the small subunit), hydrogencarbonate and ATP and carries out an ATP-coupled ligase reaction, activating hydrogencarbonate by forming carboxy phosphate which reacts with ammonia to form carbamoyl phosphate. This Streptococcus equi subsp. zooepidemicus (strain H70) protein is Carbamoyl phosphate synthase large chain.